The chain runs to 445 residues: Phosphoglucosamine mutase (445 aa).

S102 functions as the Phosphoserine intermediate in the catalytic mechanism. Mg(2+) contacts are provided by S102, D241, D243, and D245. At S102 the chain carries Phosphoserine.

Belongs to the phosphohexose mutase family. Requires Mg(2+) as cofactor. Activated by phosphorylation.

The catalysed reaction is alpha-D-glucosamine 1-phosphate = D-glucosamine 6-phosphate. Catalyzes the conversion of glucosamine-6-phosphate to glucosamine-1-phosphate. The sequence is that of Phosphoglucosamine mutase from Variovorax paradoxus (strain S110).